We begin with the raw amino-acid sequence, 369 residues long: Delta(14)-sterol reductase (369 aa).

The next 7 membrane-spanning stretches (helical) occupy residues 15-34, 54-76, 86-105, 146-168, 178-195, 208-230, and 240-262; these read QSVYVLVFYFVYLAVAGEIL, CNGLLALILLVAILGICAKLGIV, LELLSATFIFCVLVTLALYV, FFFVRAGMMGWLLINLSILAKSV, ILYQIFCALYILDYFVHE, RLGFMLVFGDLLWIPFTFSIQGW, and TVPAIVVNCLVFLIGYMVFRGAN. NADP(+) is bound by residues Lys265, Lys269, Leu289, Trp294, and 301 to 302; that span reads NY. The helical transmembrane segment at 275 to 297 threads the bilayer; sequence PIWGKPPVVVGGKLLVSGYWGIA. A helical membrane pass occupies residues 317 to 336; it reads GISSPVPYFYPIYLLILLIW. NADP(+) contacts are provided by residues Asp341, 345 to 349, and Tyr356; that span reads CAEKY.

This sequence belongs to the ERG4/ERG24 family.

The protein resides in the membrane. It carries out the reaction 4,4-dimethyl-5alpha-cholesta-8,24-dien-3beta-ol + NADP(+) = 4,4-dimethyl-5alpha-cholesta-8,14,24-trien-3beta-ol + NADPH + H(+). It functions in the pathway steroid biosynthesis; zymosterol biosynthesis; zymosterol from lanosterol: step 2/6. Functionally, reduces the C14=C15 double bond of 4,4-dimethyl-cholesta-8,14,24-trienol to produce 4,4-dimethyl-cholesta-8,24-dienol. Required for cell division and expansion and is involved in proper organization of the embryo. The chain is Delta(14)-sterol reductase (FK) from Arabidopsis thaliana (Mouse-ear cress).